The following is an 86-amino-acid chain: Exodeoxyribonuclease 7 small subunit (86 aa).

The tract at residues 1 to 26 (MQDELFETEKAPQKNTKNAKNAPKKS) is disordered.

It belongs to the XseB family. Heterooligomer composed of large and small subunits.

Its subcellular location is the cytoplasm. It carries out the reaction Exonucleolytic cleavage in either 5'- to 3'- or 3'- to 5'-direction to yield nucleoside 5'-phosphates.. Its function is as follows. Bidirectionally degrades single-stranded DNA into large acid-insoluble oligonucleotides, which are then degraded further into small acid-soluble oligonucleotides. The sequence is that of Exodeoxyribonuclease 7 small subunit from Helicobacter pylori (strain HPAG1).